The sequence spans 120 residues: uncharacterized protein (120 aa).

The interval 90 to 120 (SLASRGGHMTQSGQCHVSGSLLGRGHKSRGR) is disordered.

This is an uncharacterized protein from Homo sapiens (Human).